A 399-amino-acid chain; its full sequence is Oligoribonuclease NrnB (399 aa).

Requires Mn(2+) as cofactor. It depends on Co(2+) as a cofactor. The cofactor is Mg(2+).

The protein localises to the cytoplasm. In terms of biological role, degrades RNA oligonucleotides with a length of 5 nucleotides in a 3'- to 5'-direction. Less active on shorter RNA oligonucleotides and on those with a length of 24 nucleotides. Prefers RNA oligonucleotides containing adenines rather than cytosines. The protein is Oligoribonuclease NrnB (nrnB) of Bacillus subtilis (strain 168).